Here is a 206-residue protein sequence, read N- to C-terminus: MAGPGTAAAALLPAVLLAVLAPWAGRGGAAPTAPNGTLEAELERRWESLVARSLLAGLPVAAQPKEAAVQSGAGDYLLGIKRLRRLYCNVGIGFHLQVLPDGRIGGVHADTSDSLLELSPVERGVVSIFGVASRFFVAMSSRGRLYGSPFFTDECRFREILLPNNYNAYECDRHPGMFIALSKNGKAKKGNRVSPTMKVTHFLPRL.

Residues 1 to 29 (MAGPGTAAAALLPAVLLAVLAPWAGRGGA) form the signal peptide.

Belongs to the heparin-binding growth factors family. As to quaternary structure, interacts with FGFR1, FGFR2, FGFR3 and FGFR4. Affinity between fibroblast growth factors (FGFs) and their receptors is increased by heparan sulfate glycosaminoglycans that function as coreceptors.

It is found in the secreted. In terms of biological role, plays an important role in the regulation of embryonic development, cell proliferation, and cell differentiation. Required for normal limb and cardiac valve development during embryogenesis. May play a role in embryonic molar tooth bud development via inducing the expression of MSX1, MSX2 and MSX1-mediated expression of SDC1 in dental mesenchyme cells. In Bos taurus (Bovine), this protein is Fibroblast growth factor 4.